The chain runs to 309 residues: Anamorsin homolog (309 aa).

An N-terminal SAM-like domain region spans residues 4 to 169 (VSPGHSVLLL…SYEVGSSAQL (166 aa)). A linker region spans residues 170-218 (TLSFAKKKQVEKPKLDENTAKIWSLSAVDMNDDDIDLLDPDELLDEEDL). [2Fe-2S] cluster contacts are provided by cysteine 230, cysteine 242, cysteine 245, and cysteine 247. Residues 230–247 (CGTGGDTKKRKACKNCTC) form a fe-S binding site A region. [4Fe-4S] cluster-binding residues include cysteine 270, cysteine 273, cysteine 281, and cysteine 284. Short sequence motifs (cx2C motif) lie at residues 270–273 (CGNC) and 281–284 (CASC). Positions 270-284 (CGNCYLGDAFRCASC) are fe-S binding site B.

Belongs to the anamorsin family. As to quaternary structure, monomer. It depends on [2Fe-2S] cluster as a cofactor. Requires [4Fe-4S] cluster as cofactor.

It is found in the cytoplasm. It localises to the mitochondrion intermembrane space. In terms of biological role, component of the cytosolic iron-sulfur (Fe-S) protein assembly (CIA) machinery. Required for the maturation of extramitochondrial Fe-S proteins. Part of an electron transfer chain functioning in an early step of cytosolic Fe-S biogenesis, facilitating the de novo assembly of a [4Fe-4S] cluster on the cytosolic Fe-S scaffold complex. Electrons are transferred from NADPH via a FAD- and FMN-containing diflavin oxidoreductase. Together with the diflavin oxidoreductase, also required for the assembly of the diferric tyrosyl radical cofactor of ribonucleotide reductase (RNR), probably by providing electrons for reduction during radical cofactor maturation in the catalytic small subunit. In Branchiostoma floridae (Florida lancelet), this protein is Anamorsin homolog.